The sequence spans 195 residues: Thymidylate kinase (195 aa).

7–14 contacts ATP; it reads GVDTCGKS.

Belongs to the thymidylate kinase family.

It catalyses the reaction dTMP + ATP = dTDP + ADP. Phosphorylation of dTMP to form dTDP in both de novo and salvage pathways of dTTP synthesis. This chain is Thymidylate kinase, found in Helicobacter hepaticus (strain ATCC 51449 / 3B1).